A 232-amino-acid polypeptide reads, in one-letter code: Methylthioribulose-1-phosphate dehydratase (232 aa).

Position 91 (Cys-91) interacts with substrate. His-109, His-111, and His-191 together coordinate Zn(2+).

The protein belongs to the aldolase class II family. MtnB subfamily. The cofactor is Zn(2+).

The protein localises to the cytoplasm. It carries out the reaction 5-(methylsulfanyl)-D-ribulose 1-phosphate = 5-methylsulfanyl-2,3-dioxopentyl phosphate + H2O. The protein operates within amino-acid biosynthesis; L-methionine biosynthesis via salvage pathway; L-methionine from S-methyl-5-thio-alpha-D-ribose 1-phosphate: step 2/6. Its function is as follows. Catalyzes the dehydration of methylthioribulose-1-phosphate (MTRu-1-P) into 2,3-diketo-5-methylthiopentyl-1-phosphate (DK-MTP-1-P). The sequence is that of Methylthioribulose-1-phosphate dehydratase from Schizosaccharomyces japonicus (strain yFS275 / FY16936) (Fission yeast).